Here is a 117-residue protein sequence, read N- to C-terminus: UPF0102 protein Ssed_4252 (117 aa).

The protein belongs to the UPF0102 family.

The chain is UPF0102 protein Ssed_4252 from Shewanella sediminis (strain HAW-EB3).